The following is a 295-amino-acid chain: Trimeric intracellular cation channel type A (295 aa).

The Lumenal segment spans residues 1-18 (MELLSALSLDDLAASFSK). Residues 19 to 39 (LPVFPLFDVAYYIISILYLKY) traverse the membrane as a helical segment. Over 40–51 (EPGAVDLSKRSP) the chain is Cytoplasmic. A helical membrane pass occupies residues 52-72 (VASWLCAMLYCFGSYILADVL). Residues 73–84 (LGESPIHYFSNN) lie on the Lumenal side of the membrane. A Ca(2+)-binding site is contributed by Gly74. Residues 85–105 (ANILLASAVWYLTFFCPLNIF) traverse the membrane as a helical segment. Residues 106–144 (YKIVSFLPVKLVLVGMKEVVRVRKIAMGIHHAHHHYHHG) lie on the Cytoplasmic side of the membrane. Lys122 and Arg126 together coordinate a 1,2-diacyl-sn-glycero-3-phospho-(1D-myo-inositol-4,5-bisphosphate). A helical transmembrane segment spans residues 145–165 (WVIMVLIGWVKGSGVALMSNL). The Lumenal portion of the chain corresponds to 166 to 178 (EQLLRGVWKPETN). Residues 179–199 (EILHMSFPTKASLYGAILFTL) traverse the membrane as a helical segment. The Cytoplasmic portion of the chain corresponds to 200–201 (QQ). Residues 202-222 (AHWLPISKAYLIFFFTLFMAV) traverse the membrane as a helical segment. Over 223–233 (CKIYMTATHSH) the chain is Lumenal. Residues 234-254 (GSPFAIFESGICYVLFAAANG) form a helical membrane-spanning segment. At 255–295 (DHDDHGNHHHHHDDHDVSHSAGKSKEEHNEGTRKRKTKKAE) the chain is on the cytoplasmic side. A disordered region spans residues 258–295 (DHGNHHHHHDDHDVSHSAGKSKEEHNEGTRKRKTKKAE). Residues 267-286 (DDHDVSHSAGKSKEEHNEGT) show a composition bias toward basic and acidic residues.

This sequence belongs to the TMEM38 family. As to quaternary structure, homotrimer; conformation seems to be controled by binding to diacylglycerol (DAG).

It is found in the sarcoplasmic reticulum membrane. It localises to the nucleus membrane. It carries out the reaction K(+)(in) = K(+)(out). Channel activity is activated by a change of voltage within the sarcoplasmic reticulum lumen and blocked by luminal high Ca(2+) levels. Its function is as follows. Intracellular monovalent cation channel required for maintenance of rapid intracellular calcium release. Acts as a potassium counter-ion channel that functions in synchronization with calcium release from intracellular stores. Opened by a change of voltage within the sarcoplasmic reticulum lumen. The sequence is that of Trimeric intracellular cation channel type A (tmem38a) from Xenopus laevis (African clawed frog).